Reading from the N-terminus, the 415-residue chain is Gamma-glutamyl phosphate reductase (415 aa).

Belongs to the gamma-glutamyl phosphate reductase family.

The protein localises to the cytoplasm. It carries out the reaction L-glutamate 5-semialdehyde + phosphate + NADP(+) = L-glutamyl 5-phosphate + NADPH + H(+). It functions in the pathway amino-acid biosynthesis; L-proline biosynthesis; L-glutamate 5-semialdehyde from L-glutamate: step 2/2. Its function is as follows. Catalyzes the NADPH-dependent reduction of L-glutamate 5-phosphate into L-glutamate 5-semialdehyde and phosphate. The product spontaneously undergoes cyclization to form 1-pyrroline-5-carboxylate. This Bacillus cereus (strain 03BB102) protein is Gamma-glutamyl phosphate reductase.